The primary structure comprises 346 residues: Lipase chaperone (346 aa).

Residues 10–30 (TIVFGVITSVLLLLLLIYYVF) traverse the membrane as a helical segment.

It belongs to the lipase chaperone family.

It localises to the cell inner membrane. Its function is as follows. May be involved in the folding of the extracellular lipase during its passage through the periplasm. This is Lipase chaperone (lifO) from Acinetobacter venetianus (strain ATCC 31012 / DSM 23050 / BCRC 14357 / CCUG 45561 / CIP 110063 / KCTC 2702 / LMG 19082 / RAG-1).